An 838-amino-acid polypeptide reads, in one-letter code: MGELFRSEEMTLAQLFLQSEAAYCCVSELGELGKVQFRDLNPDVNVFQRKFVNEVRRCEEMDRKLRFVEKEIKKANIPIMDTGENPEVPFPRDMIDLEANFEKIENELKEINTNQEALKRNFLELTELKFILRKTQQFFDEMADPDLLEESSSLLEPSEMGRGAPLRLGFVAGVINRERIPTFERMLWRVCRGNVFLRQAEIENPLEDPVTGDYVHKSVFIIFFQGDQLKNRVKKICEGFRASLYPCPETPQERKEMASGVNTRIDDLQMVLNQTEDHRQRVLQAAAKNIRVWFIKVRKMKAIYHTLNLCNIDVTQKCLSAEVWCPVADLDSIQFALRRGTEHSGSTVPSILNRMQTNQTPPTYNKTNKFTCGFQNIVDAYGIGTYREINPAPYTIITFPFLFAVMFGDFGHGILMTLIAIWMVLRESRILSQKSDNEMFSTVFSGRYIILLMGLFSTYTGLIYNDCFSKSLNMFGSSWSVRPMFSKANWSDELLKTTPLLQLDPAEAGVFGGPYPFGIDPIWNIANNKLAFLNSFKMKMSVILGIIHMLFGVMLSLLNHIYFKKPLNIYLGFIPEMIFMSSLFGYLVILIFYKWTAYDAHTSKEAPSPLIHFINMFLFSYGDTSNKMLYRGQKGIQCFLVVVALLCVPWMLVAKPLVLRHQYLRRKHLGTHNFGGIRVGNGPTEEDAEIIQHDQLSTHSEEGEEPTEDEVFDFADTVVYQAIHTIEYCLGCISNTASYLRLWALSLAHAQLSEVLWTMVIHTGLSVRSLAGGFGLVFIFAAFATLTVAILLVMEGLSAFLHALRLHWIEFQNKFYTGTGFKFLPFSFDPIREGKFDD.

The Cytoplasmic segment spans residues 1–388; sequence MGELFRSEEM…DAYGIGTYRE (388 aa). A helical transmembrane segment spans residues 389–407; that stretch reads INPAPYTIITFPFLFAVMF. Over 408–409 the chain is Vacuolar; it reads GD. Residues 410-426 form a helical membrane-spanning segment; it reads FGHGILMTLIAIWMVLR. The Cytoplasmic portion of the chain corresponds to 427-441; the sequence is ESRILSQKSDNEMFS. A helical membrane pass occupies residues 442–471; sequence TVFSGRYIILLMGLFSTYTGLIYNDCFSKS. Residues 472–535 lie on the Vacuolar side of the membrane; that stretch reads LNMFGSSWSV…ANNKLAFLNS (64 aa). A helical membrane pass occupies residues 536–555; it reads FKMKMSVILGIIHMLFGVML. Topologically, residues 556–573 are cytoplasmic; that stretch reads SLLNHIYFKKPLNIYLGF. The chain crosses the membrane as a helical span at residues 574–594; that stretch reads IPEMIFMSSLFGYLVILIFYK. The Vacuolar portion of the chain corresponds to 595-639; that stretch reads WTAYDAHTSKEAPSPLIHFINMFLFSYGDTSNKMLYRGQKGIQCF. A helical transmembrane segment spans residues 640-659; it reads LVVVALLCVPWMLVAKPLVL. Topologically, residues 660–725 are cytoplasmic; that stretch reads RHQYLRRKHL…DTVVYQAIHT (66 aa). A helical membrane pass occupies residues 726–750; sequence IEYCLGCISNTASYLRLWALSLAHA. Over 751-771 the chain is Vacuolar; that stretch reads QLSEVLWTMVIHTGLSVRSLA. A helical membrane pass occupies residues 772-810; sequence GGFGLVFIFAAFATLTVAILLVMEGLSAFLHALRLHWIE. The Cytoplasmic portion of the chain corresponds to 811–838; that stretch reads FQNKFYTGTGFKFLPFSFDPIREGKFDD.

It belongs to the V-ATPase 116 kDa subunit family. V-ATPase is a heteromultimeric enzyme made up of two complexes: the ATP-hydrolytic V1 complex and the proton translocation V0 complex. The V1 complex consists of three catalytic AB heterodimers that form a heterohexamer, three peripheral stalks each consisting of EG heterodimers, one central rotor including subunits D and F, and the regulatory subunits C and H. The proton translocation complex V0 consists of the proton transport subunit a, a ring of proteolipid subunits c9c'', rotary subunit d, subunits e and f, and two accessory subunits. Detected in brain (at protein level). Highest expression in brain, intermediate levels in kidney, and relatively low levels in bone and liver.

It is found in the cytoplasmic vesicle. The protein localises to the clathrin-coated vesicle membrane. The protein resides in the secretory vesicle. It localises to the synaptic vesicle membrane. Its subcellular location is the melanosome. Functionally, subunit of the V0 complex of vacuolar(H+)-ATPase (V-ATPase), a multisubunit enzyme composed of a peripheral complex (V1) that hydrolyzes ATP and a membrane integral complex (V0) that translocates protons. V-ATPase is responsible for acidifying and maintaining the pH of intracellular compartments and in some cell types, is targeted to the plasma membrane, where it is responsible for acidifying the extracellular environment. Required for assembly and activity of the vacuolar ATPase. This chain is V-type proton ATPase 116 kDa subunit a 1 (ATP6V0A1), found in Gallus gallus (Chicken).